Here is a 137-residue protein sequence, read N- to C-terminus: Cofilin (137 aa).

Residues 5–135 form the ADF-H domain; the sequence is GVKVSPECLE…AYETVLEKVT (131 aa).

Belongs to the actin-binding proteins ADF family.

The protein resides in the cytoplasm. The protein localises to the cytoskeleton. It localises to the nucleus matrix. Its function is as follows. Controls reversibly actin polymerization and depolymerization in a pH-sensitive manner. It has the ability to bind G- and F-actin in a 1:1 ratio of cofilin to actin. Binding to F-actin is regulated by tropomyosin. It is the major component of intranuclear and cytoplasmic actin rods. Required for accumulation of actin at the cell division site via depolymerizing actin at the cell ends. In association with myosin II has a role in the assembly of the contractile ring via severing actin filaments. Involved in the maintenance of the contractile ring once formed. In association with profilin and capping protein, has a role in the mitotic reorganization of the actin cytoskeleton. Severs actin filaments (F-actin). The polypeptide is Cofilin (cof1) (Schizosaccharomyces pombe (strain 972 / ATCC 24843) (Fission yeast)).